The following is a 229-amino-acid chain: UPF0758 protein CLL_A0562 (229 aa).

One can recognise an MPN domain in the interval 107 to 229; it reads KIMSPNDLAM…FISLKEKGFI (123 aa). Zn(2+) contacts are provided by His-178, His-180, and Asp-191. The short motif at 178–191 is the JAMM motif element; it reads HNHPSGDPTPSKED.

Belongs to the UPF0758 family.

The polypeptide is UPF0758 protein CLL_A0562 (Clostridium botulinum (strain Eklund 17B / Type B)).